A 222-amino-acid polypeptide reads, in one-letter code: uncharacterized protein (222 aa).

Residues Ala-8–Asn-77 enclose the HTH gntR-type domain.

This is an uncharacterized protein from Mycoplasma pneumoniae (strain ATCC 29342 / M129 / Subtype 1) (Mycoplasmoides pneumoniae).